A 557-amino-acid chain; its full sequence is CCR4-NOT transcription complex subunit 6 (557 aa).

LRR repeat units lie at residues 52 to 73 (HLTALHLSDNSLSCIPSDIAKL), 75 to 96 (NLVYLDLSHNQIQSLPAELGNM), 98 to 120 (SLRELHLNYNQLRVLPFELGKLF), and 121 to 143 (QLQTLSLKGNPLTQDILNLCLEP). Positions 153 to 557 (LLDNLSGTAK…VNGIHLPGRR (405 aa)) are nuclease domain. E240 contributes to the Mg(2+) binding site. 4 residues coordinate substrate: E240, E276, H361, and P366. D412 contacts Mg(2+). D412 acts as the Proton donor/acceptor in catalysis. N414, N481, and F486 together coordinate substrate.

The protein belongs to the CCR4/nocturin family. Component of the CCR4-NOT complex; distinct complexes seem to exist that differ in the participation of probably mutually exclusive catalytic subunits; the complex contains two deadenylase subunits, CNOT6 or CNOT6L, and CNOT7 or CNOT8. Interacts with CNOT7 and CNOT8. Interacts with UNR. Interacts with ZFP36L1 (via N-terminus). Interacts with ZNF335. Requires Mg(2+) as cofactor.

Its subcellular location is the cytoplasm. It is found in the nucleus. The catalysed reaction is Exonucleolytic cleavage of poly(A) to 5'-AMP.. Functionally, poly(A) nuclease with 3'-5' RNase activity. Catalytic component of the CCR4-NOT complex which is one of the major cellular mRNA deadenylases and is linked to various cellular processes including bulk mRNA degradation, miRNA-mediated repression, translational repression during translational initiation and general transcription regulation. Additional complex functions may be a consequence of its influence on mRNA expression. Involved in mRNA decay mediated by the major-protein-coding determinant of instability (mCRD) of the FOS gene in the cytoplasm. In the presence of ZNF335, enhances ligand-dependent transcriptional activity of nuclear hormone receptors. Mediates cell proliferation and cell survival and prevents cellular senescence. The sequence is that of CCR4-NOT transcription complex subunit 6 (Cnot6) from Mus musculus (Mouse).